Consider the following 329-residue polypeptide: DNA-directed RNA polymerase subunit alpha (329 aa).

The alpha N-terminal domain (alpha-NTD) stretch occupies residues 1–235 (MQGSVTEFLK…EQLEAFVDLR (235 aa)). An alpha C-terminal domain (alpha-CTD) region spans residues 249-329 (FDPILLRPVD…NWPPASIADE (81 aa)).

This sequence belongs to the RNA polymerase alpha chain family. In terms of assembly, homodimer. The RNAP catalytic core consists of 2 alpha, 1 beta, 1 beta' and 1 omega subunit. When a sigma factor is associated with the core the holoenzyme is formed, which can initiate transcription.

The catalysed reaction is RNA(n) + a ribonucleoside 5'-triphosphate = RNA(n+1) + diphosphate. DNA-dependent RNA polymerase catalyzes the transcription of DNA into RNA using the four ribonucleoside triphosphates as substrates. The protein is DNA-directed RNA polymerase subunit alpha of Enterobacter sp. (strain 638).